The primary structure comprises 505 residues: Deoxyguanosinetriphosphate triphosphohydrolase (505 aa).

The HD domain maps to 66–273 (RLTHSMEVQQ…MEAADDISYC (208 aa)).

The protein belongs to the dGTPase family. Type 1 subfamily. Homotetramer. Requires Mg(2+) as cofactor.

It catalyses the reaction dGTP + H2O = 2'-deoxyguanosine + triphosphate + H(+). Functionally, dGTPase preferentially hydrolyzes dGTP over the other canonical NTPs. The protein is Deoxyguanosinetriphosphate triphosphohydrolase of Salmonella typhimurium (strain LT2 / SGSC1412 / ATCC 700720).